Reading from the N-terminus, the 145-residue chain is Deoxyuridine 5'-triphosphate nucleotidohydrolase (145 aa).

Substrate-binding positions include 65 to 67, N78, 82 to 84, and K92; these read RSG and TID.

This sequence belongs to the dUTPase family. Mg(2+) serves as cofactor.

The catalysed reaction is dUTP + H2O = dUMP + diphosphate + H(+). The protein operates within pyrimidine metabolism; dUMP biosynthesis; dUMP from dCTP (dUTP route): step 2/2. In terms of biological role, this enzyme is involved in nucleotide metabolism: it produces dUMP, the immediate precursor of thymidine nucleotides and it decreases the intracellular concentration of dUTP so that uracil cannot be incorporated into DNA. The protein is Deoxyuridine 5'-triphosphate nucleotidohydrolase of Syntrophomonas wolfei subsp. wolfei (strain DSM 2245B / Goettingen).